The following is a 235-amino-acid chain: MIDTLPAFWAVIPAAGVGARMAADRPKQYLELAGQTLLEHSLDCFLGHPALKGVVVSIAEDDPYWPGLRYASDPRIQCAAGGRERADSVLNALLVLHAQGAGDSDWVLVHDAARPNLARSDLDKLLSELADDPVGGLLAVPARDTLKRADSHGRVSATVDRSTIWQAYTPQMFRLGALHRALAECLVSDVVVTDEASAIEWSGQAPRLVEGRSDNIKVTRPEDLEWLRQRWAGKR.

The protein belongs to the IspD/TarI cytidylyltransferase family. IspD subfamily.

It carries out the reaction 2-C-methyl-D-erythritol 4-phosphate + CTP + H(+) = 4-CDP-2-C-methyl-D-erythritol + diphosphate. It functions in the pathway isoprenoid biosynthesis; isopentenyl diphosphate biosynthesis via DXP pathway; isopentenyl diphosphate from 1-deoxy-D-xylulose 5-phosphate: step 2/6. Its function is as follows. Catalyzes the formation of 4-diphosphocytidyl-2-C-methyl-D-erythritol from CTP and 2-C-methyl-D-erythritol 4-phosphate (MEP). The sequence is that of 2-C-methyl-D-erythritol 4-phosphate cytidylyltransferase from Pseudomonas putida (strain ATCC 700007 / DSM 6899 / JCM 31910 / BCRC 17059 / LMG 24140 / F1).